Reading from the N-terminus, the 250-residue chain is Pyrroloquinoline-quinone synthase (250 aa).

The protein belongs to the PqqC family.

It carries out the reaction 6-(2-amino-2-carboxyethyl)-7,8-dioxo-1,2,3,4,7,8-hexahydroquinoline-2,4-dicarboxylate + 3 O2 = pyrroloquinoline quinone + 2 H2O2 + 2 H2O + H(+). It functions in the pathway cofactor biosynthesis; pyrroloquinoline quinone biosynthesis. Its function is as follows. Ring cyclization and eight-electron oxidation of 3a-(2-amino-2-carboxyethyl)-4,5-dioxo-4,5,6,7,8,9-hexahydroquinoline-7,9-dicarboxylic-acid to PQQ. The sequence is that of Pyrroloquinoline-quinone synthase from Xanthomonas oryzae pv. oryzae (strain MAFF 311018).